The following is a 430-amino-acid chain: Glutamate-1-semialdehyde 2,1-aminomutase (430 aa).

Lysine 267 bears the N6-(pyridoxal phosphate)lysine mark.

Belongs to the class-III pyridoxal-phosphate-dependent aminotransferase family. HemL subfamily. In terms of assembly, homodimer. It depends on pyridoxal 5'-phosphate as a cofactor.

The protein localises to the cytoplasm. The enzyme catalyses (S)-4-amino-5-oxopentanoate = 5-aminolevulinate. The protein operates within porphyrin-containing compound metabolism; protoporphyrin-IX biosynthesis; 5-aminolevulinate from L-glutamyl-tRNA(Glu): step 2/2. This Anaeromyxobacter dehalogenans (strain 2CP-1 / ATCC BAA-258) protein is Glutamate-1-semialdehyde 2,1-aminomutase.